A 338-amino-acid chain; its full sequence is MKKSAFFGSVALAALVAGAASASTLDDVKARGQLICGSNPGLTGFAAPDANGVYQGFDVAVCKAVAAAVLGDPMKVKYVPLTGETRFTALASGEVDVLVRNSTWTFSRDTELALDFVAVNYYDGQGFMVNKSLGVSSAKELDGATICVQTGTTTEMNLADFFKANNMTYTPVNIADDAEGQQKFAAGACDSYTTDASGLASSRATLPNAADIVILPEIISKEPLGPVVRHGDNNWGDIVRWSFYALVAAEEYGITKANLEEVAASTQNPEIRRLLGLEGDMGKKIGLDNDFAKRAILASGNYGEVFEANIGASTSIGLARGLNAQWTQGGLMYAPPFR.

The signal sequence occupies residues 1-22 (MKKSAFFGSVALAALVAGAASA).

It belongs to the bacterial solute-binding protein 3 family.

The protein localises to the periplasm. In terms of biological role, part of a binding-protein-dependent transport system for glutamate, glutamine, aspartate and asparagine. The protein is Glutamate/glutamine/aspartate/asparagine-binding protein BztA (bztA) of Rhodobacter capsulatus (strain ATCC BAA-309 / NBRC 16581 / SB1003).